A 164-amino-acid chain; its full sequence is Xanthine-guanine phosphoribosyltransferase (164 aa).

5-phospho-alpha-D-ribose 1-diphosphate contacts are provided by residues 41-42 (RG) and 98-106 (DDLTDTGKT). Mg(2+) is bound at residue aspartate 99. Residues aspartate 102 and isoleucine 145 each contribute to the guanine site. The xanthine site is built by aspartate 102 and isoleucine 145. Residues 102 to 106 (DTGKT) and 144 to 145 (WI) each bind GMP.

The protein belongs to the purine/pyrimidine phosphoribosyltransferase family. XGPT subfamily. Homotetramer. Mg(2+) is required as a cofactor.

It localises to the cell inner membrane. It carries out the reaction GMP + diphosphate = guanine + 5-phospho-alpha-D-ribose 1-diphosphate. The enzyme catalyses XMP + diphosphate = xanthine + 5-phospho-alpha-D-ribose 1-diphosphate. It catalyses the reaction IMP + diphosphate = hypoxanthine + 5-phospho-alpha-D-ribose 1-diphosphate. The protein operates within purine metabolism; GMP biosynthesis via salvage pathway; GMP from guanine: step 1/1. It participates in purine metabolism; XMP biosynthesis via salvage pathway; XMP from xanthine: step 1/1. Its function is as follows. Purine salvage pathway enzyme that catalyzes the transfer of the ribosyl-5-phosphate group from 5-phospho-alpha-D-ribose 1-diphosphate (PRPP) to the N9 position of the 6-oxopurines guanine and xanthine to form the corresponding ribonucleotides GMP (guanosine 5'-monophosphate) and XMP (xanthosine 5'-monophosphate), with the release of PPi. To a lesser extent, also acts on hypoxanthine. This chain is Xanthine-guanine phosphoribosyltransferase, found in Rhizobium johnstonii (strain DSM 114642 / LMG 32736 / 3841) (Rhizobium leguminosarum bv. viciae).